The following is an 84-amino-acid chain: Large ribosomal subunit protein bL31B (84 aa).

This sequence belongs to the bacterial ribosomal protein bL31 family. Type B subfamily. In terms of assembly, part of the 50S ribosomal subunit.

The chain is Large ribosomal subunit protein bL31B from Photorhabdus laumondii subsp. laumondii (strain DSM 15139 / CIP 105565 / TT01) (Photorhabdus luminescens subsp. laumondii).